The chain runs to 340 residues: MAAAEDEFLPPPRLPELFDSSKQLLDEVEGATEPTGSRIVQEKVFKGLDLLDKVAKMLSQLDLFSRNEDLEEITSTDLKYLMVPAFQGALTMKQVNPRKRLDHLQQAREHFIKYLTQCHYYRVAEFELPQTKTNSAENHGAITSTAYPSLVAMASQRQAKIERYKQKKVLEHKLSTMKSAVESGQADNERVREYYLLHLQRWIDISLEEIESIDQEIKILGEKDSSREASTSNSCHQKRPPMKPFILTRNMAQAKVFGAGYPSLASMTVSDWYDQHQKHGVLPDQGIAKATPEEFRKATQQQEDQEKEEEDDEQTLQRAREWDDWKDTHPRGYGNRQNMG.

Disordered stretches follow at residues 223–243 (KDSSREASTSNSCHQKRPPMK) and 292–340 (PEEF…QNMG). The segment covering 303 to 314 (EDQEKEEEDDEQ) has biased composition (acidic residues). Positions 318 to 330 (RAREWDDWKDTHP) are enriched in basic and acidic residues.

It belongs to the IGBP1/TAP42 family.

The chain is Immunoglobulin-binding protein 1 family member C from Homo sapiens (Human).